We begin with the raw amino-acid sequence, 223 residues long: Deoxyribose-phosphate aldolase (223 aa).

The active-site Proton donor/acceptor is Asp89. Lys152 (schiff-base intermediate with acetaldehyde) is an active-site residue. Lys181 functions as the Proton donor/acceptor in the catalytic mechanism.

The protein belongs to the DeoC/FbaB aldolase family. DeoC type 1 subfamily.

The protein localises to the cytoplasm. It carries out the reaction 2-deoxy-D-ribose 5-phosphate = D-glyceraldehyde 3-phosphate + acetaldehyde. It participates in carbohydrate degradation; 2-deoxy-D-ribose 1-phosphate degradation; D-glyceraldehyde 3-phosphate and acetaldehyde from 2-deoxy-alpha-D-ribose 1-phosphate: step 2/2. In terms of biological role, catalyzes a reversible aldol reaction between acetaldehyde and D-glyceraldehyde 3-phosphate to generate 2-deoxy-D-ribose 5-phosphate. The protein is Deoxyribose-phosphate aldolase of Bacillus subtilis (strain 168).